The sequence spans 320 residues: L-lactate dehydrogenase 2 (320 aa).

4 residues coordinate NAD(+): Val-16, Asp-37, Lys-42, and Tyr-69. Position 94 (Arg-94) interacts with substrate. NAD(+)-binding positions include Ser-107, 124-126 (VTN), and Thr-149. 126–129 (NPVD) contributes to the substrate binding site. 154–157 (DTAR) is a binding site for substrate. Residues Arg-159 and His-174 each contribute to the beta-D-fructose 1,6-bisphosphate site. His-181 functions as the Proton acceptor in the catalytic mechanism. Thr-235 serves as a coordination point for substrate.

It belongs to the LDH/MDH superfamily. LDH family. In terms of assembly, homotetramer.

Its subcellular location is the cytoplasm. The catalysed reaction is (S)-lactate + NAD(+) = pyruvate + NADH + H(+). It functions in the pathway fermentation; pyruvate fermentation to lactate; (S)-lactate from pyruvate: step 1/1. Allosterically activated by fructose 1,6-bisphosphate (FBP). Functionally, catalyzes the conversion of lactate to pyruvate. In Clostridium acetobutylicum (strain ATCC 824 / DSM 792 / JCM 1419 / IAM 19013 / LMG 5710 / NBRC 13948 / NRRL B-527 / VKM B-1787 / 2291 / W), this protein is L-lactate dehydrogenase 2.